A 317-amino-acid polypeptide reads, in one-letter code: MYTKILGTGSFLPKQVRTNADLEKMVDTSDEWIVTRTGIRERRIAAPDETVSTMGYEAGLRALEMAGVDKEEIGLIVVATTSSTHAFPSAACQIQGMMGIKGCPAFDVAAACAGFTYALSIADQYVKSGAVKYALVIGADVLARTCNPEDRGTIIIFGDGAGAVLLGQSEEQGIISTHLHADGSYGELLTLPNADRVNPDNSIFLTMAGNEVFKVAVTELAHIVDETLAANNLERSALDWLVPHQANLRIISATAKKLGMSMDNVVVTLDRHGNTSAASVPCAFDEAVRDGRIKRGQLVLLEAFGGGFTWGSALVRF.

Catalysis depends on residues C112 and H244. The ACP-binding stretch occupies residues 245–249; that stretch reads QANLR. N274 is a catalytic residue.

Belongs to the thiolase-like superfamily. FabH family. As to quaternary structure, homodimer.

It localises to the cytoplasm. It carries out the reaction malonyl-[ACP] + acetyl-CoA + H(+) = 3-oxobutanoyl-[ACP] + CO2 + CoA. Its pathway is lipid metabolism; fatty acid biosynthesis. Its function is as follows. Catalyzes the condensation reaction of fatty acid synthesis by the addition to an acyl acceptor of two carbons from malonyl-ACP. Catalyzes the first condensation reaction which initiates fatty acid synthesis and may therefore play a role in governing the total rate of fatty acid production. Possesses both acetoacetyl-ACP synthase and acetyl transacylase activities. Its substrate specificity determines the biosynthesis of branched-chain and/or straight-chain of fatty acids. This chain is Beta-ketoacyl-[acyl-carrier-protein] synthase III, found in Enterobacter sp. (strain 638).